The sequence spans 498 residues: Glutamate--tRNA ligase (498 aa).

Positions 12-22 match the 'HIGH' region motif; it reads PSPTGHLHIGN. The 'KMSKS' region motif lies at 259–263; the sequence is KLSKR. Residue Lys-262 coordinates ATP.

It belongs to the class-I aminoacyl-tRNA synthetase family. Glutamate--tRNA ligase type 1 subfamily. In terms of assembly, monomer.

The protein resides in the cytoplasm. It catalyses the reaction tRNA(Glu) + L-glutamate + ATP = L-glutamyl-tRNA(Glu) + AMP + diphosphate. Its function is as follows. Catalyzes the attachment of glutamate to tRNA(Glu) in a two-step reaction: glutamate is first activated by ATP to form Glu-AMP and then transferred to the acceptor end of tRNA(Glu). The sequence is that of Glutamate--tRNA ligase from Limosilactobacillus fermentum (strain NBRC 3956 / LMG 18251) (Lactobacillus fermentum).